We begin with the raw amino-acid sequence, 84 residues long: Envelope small membrane protein (84 aa).

Residues 1–18 are Virion surface-facing; it reads MFMADAYLADTVWYVGQI. A helical transmembrane segment spans residues 19 to 39; it reads IFIVAICLLVTIVVVAFLATF. Residues 40–80 lie on the Intravirion side of the membrane; the sequence is KLCIQLCGMCNTLVLSPSIYVFNRGRQFYEFYNDVKPPVLD.

It belongs to the betacoronaviruses E protein family. Homopentamer. Interacts with membrane protein M in the budding compartment of the host cell, which is located between endoplasmic reticulum and the Golgi complex. Interacts with Nucleoprotein.

It localises to the host Golgi apparatus membrane. Its function is as follows. Plays a central role in virus morphogenesis and assembly. Acts as a viroporin and self-assembles in host membranes forming pentameric protein-lipid pores that allow ion transport. Also plays a role in the induction of apoptosis. The chain is Envelope small membrane protein from Human coronavirus OC43 (HCoV-OC43).